The chain runs to 470 residues: Cell division protein FtsA (470 aa).

Residues 416-470 are disordered; that stretch reads NKKDTHENEVESTDEEIYQSEDNHQEHKQNHEHVQDKDKDKEESKFKKLMKSLFE. Residues 425-434 are compositionally biased toward acidic residues; that stretch reads VESTDEEIYQ. Over residues 436-461 the composition is skewed to basic and acidic residues; the sequence is EDNHQEHKQNHEHVQDKDKDKEESKF.

The protein belongs to the FtsA/MreB family. As to quaternary structure, self-interacts. Interacts with FtsZ.

The protein resides in the cell membrane. Its function is as follows. Cell division protein that is involved in the assembly of the Z ring. May serve as a membrane anchor for the Z ring. The sequence is that of Cell division protein FtsA from Staphylococcus aureus (strain MSSA476).